The sequence spans 489 residues: N-succinylglutamate 5-semialdehyde dehydrogenase (489 aa).

Residue 216–221 (GSAATG) participates in NAD(+) binding. Catalysis depends on residues glutamate 239 and cysteine 273.

It belongs to the aldehyde dehydrogenase family. AstD subfamily.

The enzyme catalyses N-succinyl-L-glutamate 5-semialdehyde + NAD(+) + H2O = N-succinyl-L-glutamate + NADH + 2 H(+). It functions in the pathway amino-acid degradation; L-arginine degradation via AST pathway; L-glutamate and succinate from L-arginine: step 4/5. Functionally, catalyzes the NAD-dependent reduction of succinylglutamate semialdehyde into succinylglutamate. The protein is N-succinylglutamate 5-semialdehyde dehydrogenase of Erwinia tasmaniensis (strain DSM 17950 / CFBP 7177 / CIP 109463 / NCPPB 4357 / Et1/99).